Reading from the N-terminus, the 192-residue chain is Pyridoxal 5'-phosphate synthase subunit PdxT (192 aa).

47–49 (GES) contacts L-glutamine. C79 serves as the catalytic Nucleophile. Residues R106 and 134–135 (IR) each bind L-glutamine. Active-site charge relay system residues include H170 and E172.

Belongs to the glutaminase PdxT/SNO family. In terms of assembly, in the presence of PdxS, forms a dodecamer of heterodimers. Only shows activity in the heterodimer.

It catalyses the reaction aldehydo-D-ribose 5-phosphate + D-glyceraldehyde 3-phosphate + L-glutamine = pyridoxal 5'-phosphate + L-glutamate + phosphate + 3 H2O + H(+). It carries out the reaction L-glutamine + H2O = L-glutamate + NH4(+). Its pathway is cofactor biosynthesis; pyridoxal 5'-phosphate biosynthesis. Its function is as follows. Catalyzes the hydrolysis of glutamine to glutamate and ammonia as part of the biosynthesis of pyridoxal 5'-phosphate. The resulting ammonia molecule is channeled to the active site of PdxS. In Geobacillus sp. (strain WCH70), this protein is Pyridoxal 5'-phosphate synthase subunit PdxT.